Here is a 151-residue protein sequence, read N- to C-terminus: MFRGANAISLDAKGRLAMPSRYRDELVSRCAGQLIVTIDAVDPCLTVYPLPEWELIEAKLRELPSLREETRRLQRLLIGNAVDLELDGNGRFLIPPRLREYAKLDKRAMLVGQLNKFQLWDEDAWNAMAEADLAAIKQPGGLPDELRDLIL.

SpoVT-AbrB domains lie at 5–52 (ANAI…PLPE) and 81–124 (AVDL…DEDA).

Belongs to the MraZ family. Forms oligomers.

Its subcellular location is the cytoplasm. It localises to the nucleoid. The chain is Transcriptional regulator MraZ from Pseudomonas aeruginosa (strain LESB58).